A 365-amino-acid chain; its full sequence is MTITGIIAEFNPFHNGHKYLLDQAEGLKIVAMSGNFMQRGEPAIVDKWTRAQMALENGADLVVELPFLVSVQAADFFGQGSVDILDRLGIDSLAFGTEEVLDYQKIADLYTEKGAEMEKFVKNLPDSLSYPQKTQAMWKEFAGLDFSGNTPNHVLALAYAKAVAGRNIKLHPIQRQGAGYHSVNKDVDFASATALRQHQKDQDFLERFMPSVALFEQASKVIWEDYFPLLRYQILSNPDLTTIYQVNQEMAVRIKEAIKTAQSVEELVELVTTKRYTKARVRRLLTYILMQARESDLPEAIHVLGFTEKGRQHLKSLKGQVSLVSRIGKEPWDAMTQKVDQIYQLGKPSIAEQNFGRVPIRIETN.

ATP-binding positions include 7–20, glycine 96, asparagine 152, and arginine 175; that span reads IAEF…HKYL.

It belongs to the TmcAL family.

It localises to the cytoplasm. It catalyses the reaction cytidine(34) in elongator tRNA(Met) + acetate + ATP = N(4)-acetylcytidine(34) in elongator tRNA(Met) + AMP + diphosphate. In terms of biological role, catalyzes the formation of N(4)-acetylcytidine (ac(4)C) at the wobble position of elongator tRNA(Met), using acetate and ATP as substrates. First activates an acetate ion to form acetyladenylate (Ac-AMP) and then transfers the acetyl group to tRNA to form ac(4)C34. In Streptococcus pneumoniae (strain ATCC BAA-255 / R6), this protein is tRNA(Met) cytidine acetate ligase.